Here is a 272-residue protein sequence, read N- to C-terminus: uncharacterized protein (272 aa).

This sequence belongs to the chlamydial CPn_0389/CT_041/TC_0311 family.

This is an uncharacterized protein from Chlamydia pneumoniae (Chlamydophila pneumoniae).